Consider the following 414-residue polypeptide: MFLYSFVFLMLLGLSSAQTESATSPDEVETEPTMSTDQPETSPSMSTETEPTTETPPVTTPPPPDSLSVICTNEKMEVFLDHAKHDNLDLDKVTLKDANCKASGTLNATHLWMDVPFDSCMTNHSTDGDTITYQNSLVAETRASAGSSLISREFQAEFPFKCTYPRSAVLSVVAFSPRERIVYTKTAEFGNFTFTMDMYKTDKYETPYDSFPVRLDLDDPMFLEVKVSSNDSKLVLIPLKCWATPSSDLQDDKYYTFIENGCGKADDPSLVFNYGESNVQRFKIGAFRFIGESLNSNVYLHCDVEACRKGDSDSRCAKGCETSRRRRRSSLASSAGTEQTVTLGPMKISEKAEVGAQEAVSSLTIFAAVAGVLGVIVLFLAVALVMLYKRYRSPQSATRVVYTKTANEEGKLLV.

Residues 1-17 (MFLYSFVFLMLLGLSSA) form the signal peptide. A disordered region spans residues 18 to 65 (QTESATSPDEVETEPTMSTDQPETSPSMSTETEPTTETPPVTTPPPPD). Residues 18 to 364 (QTESATSPDE…GAQEAVSSLT (347 aa)) lie on the Extracellular side of the membrane. Over residues 39-57 (PETSPSMSTETEPTTETPP) the composition is skewed to low complexity. Positions 70–323 (ICTNEKMEVF…SRCAKGCETS (254 aa)) constitute a ZP domain. C241 and C302 are joined by a disulfide. A helical transmembrane segment spans residues 365 to 385 (IFAAVAGVLGVIVLFLAVALV). Residues 386 to 414 (MLYKRYRSPQSATRVVYTKTANEEGKLLV) lie on the Cytoplasmic side of the membrane.

As to expression, component of the acid-insoluble and acid-soluble organic matrix of the aragonitic skeleton (at protein level).

It is found in the membrane. The chain is ZP domain-containing protein from Acropora millepora (Staghorn coral).